The chain runs to 30 residues: Cyclotide hyen-H (30 aa).

A cross-link (cyclopeptide (Lys-Asp)) is located at residues lysine 1–aspartate 30. Intrachain disulfides connect cysteine 4-cysteine 20, cysteine 8-cysteine 22, and cysteine 13-cysteine 27.

Post-translationally, this is a cyclic peptide. As to expression, detected in stems (at protein level).

Functionally, probably participates in a plant defense mechanism. This chain is Cyclotide hyen-H, found in Pigea enneasperma (Spade flower).